Consider the following 458-residue polypeptide: Smoothelin-like protein 2 (458 aa).

The stretch at 24–88 (LEGAVRALHE…RQVESLGLTT (65 aa)) forms a coiled coil. Disordered stretches follow at residues 87 to 111 (TTGLAPAPGTPSPPPAPGVPNRAPR), 123 to 142 (FSLSGRSQSLDHHDEASELE), and 151 to 312 (IIEN…GAQA). Residues 94–104 (PGTPSPPPAPG) show a composition bias toward pro residues. Position 96 is a phosphothreonine (Thr-96). 3 positions are modified to phosphoserine: Ser-98, Ser-126, and Ser-131. Basic and acidic residues predominate over residues 131-142 (SLDHHDEASELE). Composition is skewed to low complexity over residues 158–167 (PGADPGDGPP) and 209–220 (TSATALSPTSAA). Residues 225-244 (LSSSPSEATTPWTPSPSEKN) are compositionally biased toward polar residues. Low complexity predominate over residues 245-254 (SSLPRSLSSS). Ser-252, Ser-254, and Ser-267 each carry phosphoserine. The segment covering 270–283 (LVTPPQSPPSPQPP) has biased composition (pro residues). Phosphothreonine is present on Thr-272. Ser-276 carries the post-translational modification Phosphoserine. The span at 290 to 299 (RPGERRRELV) shows a compositional bias: basic and acidic residues. Residues 300–310 (RSQTLPRTSGA) are compositionally biased toward polar residues. Position 341 is a phosphoserine (Ser-341). One can recognise a Calponin-homology (CH) domain in the interval 348-455 (SSIKQILLEW…YVQSLYNHLR (108 aa)).

This sequence belongs to the smoothelin family.

The chain is Smoothelin-like protein 2 (SMTNL2) from Bos taurus (Bovine).